A 193-amino-acid polypeptide reads, in one-letter code: ATP-dependent Clp protease proteolytic subunit (193 aa).

The active-site Nucleophile is the serine 98. Histidine 123 is an active-site residue.

Belongs to the peptidase S14 family. In terms of assembly, fourteen ClpP subunits assemble into 2 heptameric rings which stack back to back to give a disk-like structure with a central cavity, resembling the structure of eukaryotic proteasomes.

It is found in the cytoplasm. It catalyses the reaction Hydrolysis of proteins to small peptides in the presence of ATP and magnesium. alpha-casein is the usual test substrate. In the absence of ATP, only oligopeptides shorter than five residues are hydrolyzed (such as succinyl-Leu-Tyr-|-NHMec, and Leu-Tyr-Leu-|-Tyr-Trp, in which cleavage of the -Tyr-|-Leu- and -Tyr-|-Trp bonds also occurs).. Functionally, cleaves peptides in various proteins in a process that requires ATP hydrolysis. Has a chymotrypsin-like activity. Plays a major role in the degradation of misfolded proteins. The sequence is that of ATP-dependent Clp protease proteolytic subunit from Haemophilus influenzae (strain PittEE).